The primary structure comprises 236 residues: Small ribosomal subunit protein uS5 (236 aa).

In terms of domain architecture, S5 DRBM spans 61–124 (ENQEILDIAL…NYAKLNIIEI (64 aa)).

The protein belongs to the universal ribosomal protein uS5 family. In terms of assembly, part of the 30S ribosomal subunit. Contacts protein S4.

Functionally, with S4 and S12 plays an important role in translational accuracy. This Pyrococcus abyssi (strain GE5 / Orsay) protein is Small ribosomal subunit protein uS5.